Here is a 205-residue protein sequence, read N- to C-terminus: Polyamine-modulated factor 1 (205 aa).

Positions 1-30 are disordered; sequence MAEASSANLGSGCEEKRHEGSSSESVPPGT. Residues 141-193 adopt a coiled-coil conformation; it reads FLQQRDTLRRHVQKQEAENQQLADAVLAGRRQVEELQLQVQAQQQAWQALHRE.

As to quaternary structure, component of the MIS12 complex composed of MIS12, DSN1, NSL1 and PMF1. Interacts with COPS7A. Interacts via its coiled-coil domain with the leucine-zipper domain of NFE2L2. The interaction with NFE2L2 is required for the transcriptional regulation of SSAT. Highest levels of expression in heart and skeletal muscle, with significant levels expressed in kidney and liver.

The protein localises to the nucleus. The protein resides in the chromosome. It localises to the centromere. Its subcellular location is the kinetochore. In terms of biological role, part of the MIS12 complex which is required for normal chromosome alignment and segregation and kinetochore formation during mitosis. May act as a cotranscription partner of NFE2L2 involved in regulation of polyamine-induced transcription of SSAT. The protein is Polyamine-modulated factor 1 of Homo sapiens (Human).